A 645-amino-acid polypeptide reads, in one-letter code: 1,4-alpha-glucan branching enzyme GlgB (645 aa).

The active-site Nucleophile is aspartate 309. The active-site Proton donor is glutamate 352. The interval 619 to 645 (VKTRKGSKKQDGSKTKVRSNVTSRGKR) is disordered. Positions 636-645 (RSNVTSRGKR) are enriched in polar residues.

This sequence belongs to the glycosyl hydrolase 13 family. GlgB subfamily. In terms of assembly, monomer.

The catalysed reaction is Transfers a segment of a (1-&gt;4)-alpha-D-glucan chain to a primary hydroxy group in a similar glucan chain.. It participates in glycan biosynthesis; glycogen biosynthesis. Catalyzes the formation of the alpha-1,6-glucosidic linkages in glycogen by scission of a 1,4-alpha-linked oligosaccharide from growing alpha-1,4-glucan chains and the subsequent attachment of the oligosaccharide to the alpha-1,6 position. This chain is 1,4-alpha-glucan branching enzyme GlgB, found in Bacillus cereus (strain B4264).